The primary structure comprises 177 residues: MASLNMIVAVNKTGGIGFENQIPWHEPEDLKHFKAVTMNSVLIMGRKTFASLPKVLPGRLHVVVSKTVPPTQNTDQVVYVSTYQIAVRTASLLVDKPEYSQIFVIGGKSAYENLAAYVDKLYLTRVQLNTQQDTELDLSLFKSWKLVSEVPTITENKTKLIFQIWINPNPISEEPTC.

In terms of domain architecture, DHFR spans 3–167 (SLNMIVAVNK…TKLIFQIWIN (165 aa)).

Belongs to the dihydrofolate reductase family. In terms of assembly, homodimer.

It carries out the reaction (6S)-5,6,7,8-tetrahydrofolate + NADP(+) = 7,8-dihydrofolate + NADPH + H(+). It participates in cofactor biosynthesis; tetrahydrofolate biosynthesis; 5,6,7,8-tetrahydrofolate from 7,8-dihydrofolate: step 1/1. Functionally, key enzyme in folate metabolism. Catalyzes an essential reaction for de novo glycine and purine synthesis, and for DNA precursor synthesis. The protein is Dihydrofolate reductase type 9 (dhfrIX) of Escherichia coli.